We begin with the raw amino-acid sequence, 464 residues long: Argininosuccinate lyase (464 aa).

The protein belongs to the lyase 1 family. Argininosuccinate lyase subfamily.

The protein resides in the cytoplasm. The enzyme catalyses 2-(N(omega)-L-arginino)succinate = fumarate + L-arginine. It functions in the pathway amino-acid biosynthesis; L-arginine biosynthesis; L-arginine from L-ornithine and carbamoyl phosphate: step 3/3. The sequence is that of Argininosuccinate lyase from Frankia casuarinae (strain DSM 45818 / CECT 9043 / HFP020203 / CcI3).